We begin with the raw amino-acid sequence, 110 residues long: Circadian clock oscillator protein KaiB (110 aa).

It belongs to the KaiB family. The KaiABC complex composition changes during the circadian cycle to control KaiC phosphorylation. Complexes KaiC(6), KaiA(2-4):KaiC(6), KaiB(6):KaiC(6) and KaiC(6):KaiB(6):KaiA(12) are among the most important forms, many form cooperatively. Undergoes a major conformational rearrangment; in the free state forms homotetramers as a dimer of dimers. When bound to the CI domain of KaiC switches to a monomeric thioredoxin-fold (KaiB(fs)). KaiB(fs) binds CikA, leading it to dephosphorylate phospho-RpaA.

Key component of the KaiABC oscillator complex, which constitutes the main circadian regulator in cyanobacteria. Complex composition changes during the circadian cycle to control KaiC phosphorylation. KaiA stimulates KaiC autophosphorylation, while KaiB sequesters KaiA, leading to KaiC autodephosphorylation. Phospho-Ser-431 KaiC accumulation triggers binding of KaiB to form the KaiB(6):KaiC(6) complex, leading to changes in output regulators CikA and SasA. KaiB switches to a thioredoxin-like fold (KaiB(fs)) when bound to KaiC. KaiB(6):KaiC(6) formation exposes a site for KaiA binding that sequesters KaiA from KaiC, making the KaiC(6):KaiB(6):KaiA(12) complex that results in KaiC autodephosphorylation. Functionally, a metamorphic protein which reversibly switches between an inactive tetrameric fold and a rare, thioredoxin-like monomeric fold (KaiB(fs)). KaiB(fs) binds phospho-KaiC, KaiA and CikA. KaiA and CikA compete for binding to KaiB(fs), and KaiB(fs) and SasA compete for binding to KaiC, thus the clock oscillator and output signal pathway are tightly coupled. This is Circadian clock oscillator protein KaiB from Synechococcus sp. (strain RCC307).